Here is a 618-residue protein sequence, read N- to C-terminus: Beta-glucosidase C (618 aa).

The first 19 residues, 1–19 (MRVDSTVLALVALATDCLG), serve as a signal peptide directing secretion. Asn-40, Asn-82, Asn-104, Asn-211, and Asn-263 each carry an N-linked (GlcNAc...) asparagine glycan. Asp-330 is a catalytic residue. Asn-417, Asn-448, Asn-477, Asn-482, Asn-502, and Asn-517 each carry an N-linked (GlcNAc...) asparagine glycan.

Belongs to the glycosyl hydrolase 3 family.

Its subcellular location is the secreted. It catalyses the reaction Hydrolysis of terminal, non-reducing beta-D-glucosyl residues with release of beta-D-glucose.. It participates in glycan metabolism; cellulose degradation. Functionally, beta-glucosidases are one of a number of cellulolytic enzymes involved in the degradation of cellulosic biomass. Catalyzes the last step releasing glucose from the inhibitory cellobiose. The sequence is that of Beta-glucosidase C (bglC) from Emericella nidulans (strain FGSC A4 / ATCC 38163 / CBS 112.46 / NRRL 194 / M139) (Aspergillus nidulans).